Here is a 633-residue protein sequence, read N- to C-terminus: Polypeptide N-acetylgalactosaminyltransferase 3 (633 aa).

Over 1–19 (MAHLKRLVKLHIKRHYHKK) the chain is Cytoplasmic. A helical; Signal-anchor for type II membrane protein membrane pass occupies residues 20-37 (FWKLGAVIFFFIIVLVLM). Over 38 to 633 (QREVSVQYSK…LQKWILSQND (596 aa)) the chain is Lumenal. An N-linked (GlcNAc...) asparagine glycan is attached at Asn132. The interval 184–293 (LPTTSVIIVF…YGWLEPLLAR (110 aa)) is catalytic subdomain A. Residues Asp277 and His279 each contribute to the Mn(2+) site. A glycan (N-linked (GlcNAc...) asparagine) is linked at Asn297. The tract at residues 356-418 (PIKTPTFAGG…PCSVVGHVFR (63 aa)) is catalytic subdomain B. His415 provides a ligand contact to Mn(2+). Residue Asn484 is glycosylated (N-linked (GlcNAc...) asparagine). The region spanning 504 to 630 (VISGYIKSVG…SDPLQKWILS (127 aa)) is the Ricin B-type lectin domain. Residues Cys517 and Cys535 are joined by a disulfide bond. Residues Asp519, Glu522, His536, and Asn541 each coordinate UDP-N-acetyl-alpha-D-galactosamine. Cystine bridges form between Cys561-Cys574 and Cys605-Cys618.

The protein belongs to the glycosyltransferase 2 family. GalNAc-T subfamily. It depends on Mn(2+) as a cofactor. Expressed in organs that contain secretory epithelial glands. Highly expressed in pancreas, skin, kidney and testis. Weakly expressed in prostate, ovary, intestine and colon. Also expressed in placenta and lung and fetal lung and fetal kidney.

It is found in the golgi apparatus. The protein resides in the golgi stack membrane. The catalysed reaction is L-seryl-[protein] + UDP-N-acetyl-alpha-D-galactosamine = a 3-O-[N-acetyl-alpha-D-galactosaminyl]-L-seryl-[protein] + UDP + H(+). It carries out the reaction L-threonyl-[protein] + UDP-N-acetyl-alpha-D-galactosamine = a 3-O-[N-acetyl-alpha-D-galactosaminyl]-L-threonyl-[protein] + UDP + H(+). It functions in the pathway protein modification; protein glycosylation. Catalyzes the initial reaction in O-linked oligosaccharide biosynthesis, the transfer of an N-acetyl-D-galactosamine residue to a serine or threonine residue on the protein receptor. Has activity toward HIV envelope glycoprotein gp120, EA2, MUC2, MUC1A and MUC5AC. Probably glycosylates fibronectin in vivo. Glycosylates FGF23. This is Polypeptide N-acetylgalactosaminyltransferase 3 (GALNT3) from Homo sapiens (Human).